The following is a 406-amino-acid chain: MELPTYAVSQSLLASRSVSSPRGDQPVRAATNGTQGQGQGQDGQNLTGKRKRTNPGYPSRESPKGSSSRCNGLTQYAVPASFQSPQIVQYSPPNQILRTPPSNDVDDQLSVNSRSEPVYPTLGVPGAVRQTQEQLQLHAARIPASHFLNNVPNFGYHSTDKDVAMKQNYFSDSTFFPSPAITDTWGELPAPDLSWETTTRPHSPGNRATPTVDKHVSVSAFEAALETGELASDRSIQNAYNAPSTTGDNHLETLVSIQDGLSQVLKAVEAAGFDSLDSAVIAYYQRSSKGNEWLRQEQRLNRMRRLPVLLKELHLAAQGWGQWERRNFQEQIIKSTEDILFAELQDHLATRRNSPHASPCSIEQRSQARQHMMEHDADPEAEFYDTSHGTEGIPADEMLHVNLLLY.

Residues 1–72 (MELPTYAVSQ…PKGSSSRCNG (72 aa)) form a disordered region. A compositionally biased stretch (low complexity) spans 7 to 20 (AVSQSLLASRSVSS).

Belongs to the bZIP family.

The protein localises to the nucleus. Its function is as follows. The two putative transcription factors FPSE_09188 and FPSE_09189 could be responsible for orchestrating expression of the W493 A and B biosynthesis cluster genes. W493 A and B consist of six amino acid residues D-allo-thr, L-Ala, D-Ala, L-Gln, D-Tyr, and L-Val/L-Ile linked to a 3-hydroxy-4-methyltetradecanoic acid polyketide chain. The chain is Probable transcription factor FPSE_09188 from Fusarium pseudograminearum (strain CS3096) (Wheat and barley crown-rot fungus).